The primary structure comprises 85 residues: uncharacterized protein (85 aa).

Transmembrane regions (helical) follow at residues 16–34 (WALS…CAYL) and 50–71 (LSCI…KIIF).

To E.coli YhdT.

Its subcellular location is the cell membrane. This is an uncharacterized protein from Haemophilus influenzae (strain ATCC 51907 / DSM 11121 / KW20 / Rd).